The sequence spans 108 residues: Hydrogenase expression/formation protein HupN (108 aa).

The disordered stretch occupies residues 88 to 108 (REPQLPPHLQAQLPPKEPNSP).

The protein belongs to the HupF/HypC family.

This chain is Hydrogenase expression/formation protein HupN (hupN), found in Azotobacter chroococcum mcd 1.